The sequence spans 146 residues: Flagellar assembly factor FliW (146 aa).

This sequence belongs to the FliW family. As to quaternary structure, interacts with translational regulator CsrA and flagellin(s).

The protein localises to the cytoplasm. Functionally, acts as an anti-CsrA protein, binds CsrA and prevents it from repressing translation of its target genes, one of which is flagellin. Binds to flagellin and participates in the assembly of the flagellum. This is Flagellar assembly factor FliW from Shouchella clausii (strain KSM-K16) (Alkalihalobacillus clausii).